The following is a 1561-amino-acid chain: Rho GTPase-activating protein 190 (1561 aa).

FF domains lie at 252–320, 365–419, 426–480, and 482–547; these read YQES…HMKK, YLQN…YLNS, KIGW…HQDD, and IEKS…HLRF. One can recognise a pG1 pseudoGTPase domain in the interval 592 to 765; that stretch reads SGSDRTLNLL…EPYPSNHTDL (174 aa). In terms of domain architecture, pG2 pseudoGTPase spans 766–926; sequence RILCCIFCGD…LKTAWDNKYE (161 aa). Ser-973, Ser-975, Ser-985, Ser-988, and Ser-996 each carry phosphoserine. Positions 1054–1074 are disordered; sequence KIRPKGPSQTLKVGEAPSRNC. Residues 1349 to 1552 form the Rho-GAP domain; sequence AQFGKLMITS…TMIDQFPYLF (204 aa).

Its activity is regulated as follows. Negatively regulated by integrin, bsk and Src/Src64B. Its function is as follows. GTPase-activating protein (GAP) for RhoA/Rho1 that plays an essential role in the stability of dorsal branches of mushroom body (MB) neurons. The MB neurons are the center for olfactory learning and memory. Acts by converting RhoA/Rho1 to an inactive GDP-bound state, leading to repress the RhoA/Rho1-Drok-MRLC signaling pathway thereby maintaining axon branch stability. The sequence is that of Rho GTPase-activating protein 190 (RhoGAPp190) from Drosophila melanogaster (Fruit fly).